A 460-amino-acid polypeptide reads, in one-letter code: Nitrilase and fragile histidine triad fusion protein NitFhit (460 aa).

Residues 33-279 (ATIAVGQMRS…LDIGTAEVDL (247 aa)) form the CN hydrolase domain. Residues E72, K142, and C183 contribute to the active site. Residues 315–422 (DRPFATNIVD…MPRRLGDFGH (108 aa)) form the HIT domain. The Histidine triad motif motif lies at 407–411 (HVHFH). Residue H409 is the Tele-AMP-histidine intermediate of the active site.

It in the N-terminal section; belongs to the UPF0012 family. Homotetramer. Mn(2+) is required as a cofactor.

It carries out the reaction P(1),P(3)-bis(5'-adenosyl) triphosphate + H2O = AMP + ADP + 2 H(+). In terms of biological role, cleaves A-5'-PPP-5'A to yield AMP and ADP. This Drosophila melanogaster (Fruit fly) protein is Nitrilase and fragile histidine triad fusion protein NitFhit.